The sequence spans 221 residues: Transcription repressor OFP8 (221 aa).

A compositionally biased stretch (acidic residues) spans 124 to 138 (EDEGDKEESEDDDSD). The tract at residues 124 to 147 (EDEGDKEESEDDDSDTLFSSRSFS) is disordered. The OVATE domain occupies 158–217 (VVKKSKDPYEDFRTSMVEMIVERQIFAPAELQQLLQCFLSLNSRQHHKVIVQVFLEIYAT).

As to expression, expressed in roots, rosette and cauline leaves, shoots, stems, flower buds and siliques.

It is found in the nucleus. In terms of biological role, transcriptional repressor that regulates multiple aspects of plant growth and development through the regulation of BEL1-LIKE (BLH) and KNOX TALE (KNAT) homeodomain transcription factors. The chain is Transcription repressor OFP8 (OFP8) from Arabidopsis thaliana (Mouse-ear cress).